We begin with the raw amino-acid sequence, 276 residues long: Glutamate racemase (276 aa).

Substrate is bound by residues 9 to 10 (DS) and 41 to 42 (YG). The Proton donor/acceptor role is filled by Cys-72. 73–74 (NT) serves as a coordination point for substrate. Catalysis depends on Cys-183, which acts as the Proton donor/acceptor. Residue 184–185 (TH) participates in substrate binding.

The protein belongs to the aspartate/glutamate racemases family.

It carries out the reaction L-glutamate = D-glutamate. The protein operates within cell wall biogenesis; peptidoglycan biosynthesis. Its function is as follows. Provides the (R)-glutamate required for cell wall biosynthesis. The polypeptide is Glutamate racemase (Shouchella clausii (strain KSM-K16) (Alkalihalobacillus clausii)).